The sequence spans 523 residues: Tyrosine-protein kinase transforming protein Src (523 aa).

The disordered stretch occupies residues 1-50 (MGSSKSKPKDPSQRRRSLEPPDSTHHGGFPASQTPNKTAAPDTHRTPSRS). Gly2 carries the N-myristoyl glycine; by host lipid modification. Positions 7 to 25 (KPKDPSQRRRSLEPPDSTH) are enriched in basic and acidic residues. Residues 71–139 (TSPQRAGALA…PSNYVAPSDS (69 aa)) enclose the SH3 domain. The region spanning 145–242 (WYFGKITRRE…GLCHRLTNVC (98 aa)) is the SH2 domain. The 251-residue stretch at 264-514 (LRLEVKLGQG…TFEYLQAQLL (251 aa)) folds into the Protein kinase domain. Residues 270 to 278 (LGQGYFGEV) and Lys292 each bind ATP. Asp383 (proton acceptor) is an active-site residue. Tyr413 is modified (phosphotyrosine; by autocatalysis).

This sequence belongs to the protein kinase superfamily. Tyr protein kinase family. SRC subfamily. Homodimer. Post-translationally, the phosphorylated form is termed pp60v-src.

The enzyme catalyses L-tyrosyl-[protein] + ATP = O-phospho-L-tyrosyl-[protein] + ADP + H(+). In terms of biological role, this phosphoprotein, required for both the initiation and the maintenance of neoplastic transformation, is a protein kinase that catalyzes the phosphorylation of tyrosine residues in vitro. The chain is Tyrosine-protein kinase transforming protein Src (V-SRC) from Gallus gallus (Chicken).